The primary structure comprises 290 residues: Enoyl-CoA hydratase, mitochondrial (290 aa).

Residues Met1–Phe27 constitute a mitochondrion transit peptide. Thr46 is modified (phosphothreonine). Residue Ala98–Lys101 participates in substrate binding. Lys101 is subject to N6-acetyllysine; alternate. Residue Lys101 is modified to N6-succinyllysine; alternate. Residue Ser114 is modified to Phosphoserine. An N6-acetyllysine; alternate modification is found at Lys115. Position 115 is an N6-succinyllysine; alternate (Lys115). Lys118 carries the N6-acetyllysine modification. A substrate-binding site is contributed by Gly141. Residue Lys204 is modified to N6-succinyllysine. Lys211 carries the post-translational modification N6-acetyllysine.

This sequence belongs to the enoyl-CoA hydratase/isomerase family. Homohexamer; dimer of trimers. Liver, fibroblast, muscle. Barely detectable in spleen and kidney.

It is found in the mitochondrion matrix. The catalysed reaction is a (3S)-3-hydroxyacyl-CoA = a (2E)-enoyl-CoA + H2O. The enzyme catalyses a (3E)-enoyl-CoA = a 4-saturated (2E)-enoyl-CoA. It carries out the reaction (3E)-hexenoyl-CoA = (2E)-hexenoyl-CoA. It catalyses the reaction (3S)-3-hydroxybutanoyl-CoA = (2E)-butenoyl-CoA + H2O. The catalysed reaction is 3-hydroxyisovaleryl-CoA = 3-methylbut-2-enoyl-CoA + H2O. The enzyme catalyses 3-hydroxypropanoyl-CoA = acryloyl-CoA + H2O. It carries out the reaction 3-hydroxybutanoyl-CoA = (2E)-butenoyl-CoA + H2O. It catalyses the reaction 2-methylpropenoyl-CoA + H2O = (S)-3-hydroxyisobutanoyl-CoA. The catalysed reaction is (3S)-hydroxyhexanoyl-CoA = (2E)-hexenoyl-CoA + H2O. The enzyme catalyses (3S)-hydroxydecanoyl-CoA = (2E)-decenoyl-CoA + H2O. It participates in lipid metabolism; fatty acid beta-oxidation. Its function is as follows. Converts unsaturated trans-2-enoyl-CoA species ((2E)-enoyl-CoA) to the corresponding (3S)-3hydroxyacyl-CoA species through addition of a water molecule to the double bond. Catalyzes the hydration of medium- and short-chained fatty enoyl-CoA thioesters from 4 carbons long (C4) up to C16. Has high substrate specificity for crotonyl-CoA ((2E)-butenoyl-CoA) and moderate specificity for acryloyl-CoA, 3-methylcrotonyl-CoA (3-methyl-(2E)-butenoyl-CoA) and methacrylyl-CoA ((2E)-2-methylpropenoyl-CoA). Can bind tiglyl-CoA (2-methylcrotonoyl-CoA), but hydrates only a small amount of this substrate. Plays a key role in the beta-oxidation spiral of short- and medium-chain fatty acid oxidation. At a lower rate than the hydratase reaction, catalyzes the isomerase reaction of trans-3-enoyl-CoA species (such as (3E)-hexenoyl-CoA) to trans-2-enoyl-CoA species (such as (2E)-hexenoyl-CoA), which are subsequently hydrated to 3(S)-3-hydroxyacyl-CoA species (such as (3S)-hydroxyhexanoyl-CoA). The sequence is that of Enoyl-CoA hydratase, mitochondrial from Homo sapiens (Human).